A 492-amino-acid polypeptide reads, in one-letter code: 2,3-bisphosphoglycerate-independent phosphoglycerate mutase (492 aa).

The Mn(2+) site is built by Asp11 and Ser61. Ser61 serves as the catalytic Phosphoserine intermediate. Residues His118, 147-148 (RD), Arg178, Arg184, 248-251 (RNDR), and Lys320 contribute to the substrate site. Residues Asp386, His390, Asp427, His428, and His445 each coordinate Mn(2+).

This sequence belongs to the BPG-independent phosphoglycerate mutase family. Monomer. Mn(2+) is required as a cofactor.

The catalysed reaction is (2R)-2-phosphoglycerate = (2R)-3-phosphoglycerate. Its pathway is carbohydrate degradation; glycolysis; pyruvate from D-glyceraldehyde 3-phosphate: step 3/5. Catalyzes the interconversion of 2-phosphoglycerate and 3-phosphoglycerate. This is 2,3-bisphosphoglycerate-independent phosphoglycerate mutase from Campylobacter jejuni subsp. jejuni serotype O:2 (strain ATCC 700819 / NCTC 11168).